Reading from the N-terminus, the 401-residue chain is L-rhamnonate dehydratase (401 aa).

The substrate site is built by His29 and Arg55. Mg(2+) contacts are provided by Asp222, Glu248, and Glu276. His325 functions as the Proton acceptor in the catalytic mechanism. Glu345 is a binding site for substrate.

This sequence belongs to the mandelate racemase/muconate lactonizing enzyme family. RhamD subfamily. As to quaternary structure, homooctamer; tetramer of dimers. Mg(2+) is required as a cofactor.

The enzyme catalyses L-rhamnonate = 2-dehydro-3-deoxy-L-rhamnonate + H2O. In terms of biological role, catalyzes the dehydration of L-rhamnonate to 2-keto-3-deoxy-L-rhamnonate (KDR). In Salmonella schwarzengrund (strain CVM19633), this protein is L-rhamnonate dehydratase.